Reading from the N-terminus, the 5141-residue chain is SCO-spondin (5141 aa).

Positions 1 to 17 are cleaved as a signal peptide; it reads MLLPALLFGMLWAPANG. Residues 18–102 form the EMI domain; the sequence is HWCEQIETVH…ACCPGWGGIH (85 aa). 4 N-linked (GlcNAc...) asparagine glycosylation sites follow: Asn-88, Asn-130, Asn-150, and Asn-167. Positions 193 to 364 constitute a VWFD 1 domain; it reads ATCATWSGFH…RLPGYEPGCL (172 aa). Intrachain disulfides connect Cys-195–Cys-325, Cys-217–Cys-363, and Cys-239–Cys-245. One can recognise a TIL 1 domain in the interval 472-527; sequence CPGGQLYSDCISSCPPSCSAVAQGEEGSCGKECVSGCECPTGLFWDGALCVPAAHC. The VWFD 2 domain maps to 565–738; the sequence is AECAVGGDGH…FQVSGDGRCP (174 aa). Cystine bridges form between Cys-567/Cys-700 and Cys-591/Cys-737. 2 N-linked (GlcNAc...) asparagine glycosylation sites follow: Asn-657 and Asn-822. The 54-residue stretch at 830 to 883 folds into the TIL 2 domain; it reads CPGGQVYQECAPACGHYCGEPEDCKELGSCVAGCNCPPGLLWDLEGQCVPPSMC. N-linked (GlcNAc...) asparagine glycosylation is found at Asn-895, Asn-949, and Asn-991. In terms of domain architecture, VWFD 3 spans 1017–1187; sequence GWCQASGAPH…HSWRLNPLCP (171 aa). Intrachain disulfides connect Cys-1019–Cys-1151, Cys-1041–Cys-1186, and Cys-1062–Cys-1069. The TIL 3 domain maps to 1280–1336; sequence CEGGQVYEPCGSTCPPTCHDHHPELRWHCQAITCVEGCFCPEGTLLHGGTCVELTDC. A glycan (N-linked (GlcNAc...) asparagine) is linked at Asn-1357. 4 consecutive LDL-receptor class A domains span residues 1380 to 1417, 1420 to 1456, 1456 to 1492, and 1496 to 1534; these read GCAEGEALCRESGHCVPLEWLCDNQDDCGDGSDEEGCD, VCGEGQMSCQSGRCLPLSLICDGQDDCGDGTDEQGCL, LCPQGFLACADGRCLPPALLCDGHPDCLDAADEESCL, and SCTSGEVSCVDGPCIRTIQLCDGVWDCPDGADEGPVHCS. 12 disulfides stabilise this stretch: Cys-1381–Cys-1394, Cys-1388–Cys-1407, Cys-1401–Cys-1416, Cys-1421–Cys-1433, Cys-1428–Cys-1446, Cys-1440–Cys-1455, Cys-1457–Cys-1469, Cys-1464–Cys-1482, Cys-1476–Cys-1491, Cys-1497–Cys-1509, Cys-1504–Cys-1522, and Cys-1516–Cys-1533. Residues 1533–1567 are disordered; the sequence is CSSPSLPTPPAGIGQNPSTSSPDTSPSPVGSASPA. Positions 1549–1567 are enriched in low complexity; that stretch reads PSTSSPDTSPSPVGSASPA. 2 consecutive LDL-receptor class A domains span residues 1569–1605 and 1607–1646; these read PCSLSEFQCNSGECTPRGWRCDREEDCTDGSDELDCG and PCKLYQMPCAHGPHCLSPGQLCDGVAQCPDGSDEDPDVCE. Disulfide bonds link Cys-1570-Cys-1582, Cys-1577-Cys-1595, Cys-1589-Cys-1604, Cys-1608-Cys-1621, Cys-1615-Cys-1634, and Cys-1628-Cys-1645. Asn-1655 and Asn-1668 each carry an N-linked (GlcNAc...) asparagine glycan. In terms of domain architecture, LDL-receptor class A 7 spans 1660–1700; that stretch reads PCPEFSCPNGTCIDFLLVCDGSPDCELADETEPSLDEQGCG. 9 disulfides stabilise this stretch: Cys-1661-Cys-1671, Cys-1666-Cys-1684, Cys-1678-Cys-1699, Cys-1711-Cys-1747, Cys-1715-Cys-1752, Cys-1726-Cys-1737, Cys-1767-Cys-1964, Cys-1771-Cys-1969, and Cys-1781-Cys-1791. 2 consecutive TSP type-1 domains span residues 1699–1753 and 1755–1970; these read CGTW…EACP and DGEW…EPCE. A glycan (N-linked (GlcNAc...) asparagine) is linked at Asn-1725. N-linked (GlcNAc...) asparagine glycosylation is present at Asn-1814. 2 consecutive EGF-like domains span residues 1829 to 1868 and 1869 to 1895; these read CPLTCDDISGEAVCSPDRPCSSPGCWCPEGKVLGTEGRCV and RPRQCPCLVDGIRYWPGQRIKMDCQLC. In terms of domain architecture, VWFC 1 spans 1970–2030; it reads EGCEQWGLTY…GMGESCCHCA (61 aa). An N-linked (GlcNAc...) asparagine glycan is attached at Asn-2035. Disulfide bonds link Cys-2070–Cys-2226, Cys-2236–Cys-2248, Cys-2243–Cys-2261, and Cys-2255–Cys-2270. One can recognise an F5/8 type C domain in the interval 2070 to 2226; the sequence is CYSPLGLAGL…IFLWVELLGC (157 aa). Residues 2087–2109 form a disordered region; the sequence is PLEHSTRAAPVEAPTAGPGPRED. N-linked (GlcNAc...) asparagine glycans are attached at residues Asn-2130 and Asn-2148. One can recognise an LDL-receptor class A 8 domain in the interval 2235-2271; sequence LCPGTRHRCANGDCALKGGPCDGAVDCEDGSDEEGCG. The segment at 2262–2335 is disordered; that stretch reads EDGSDEEGCG…SPSASEGLLP (74 aa). Polar residues predominate over residues 2276-2294; sequence STASRVHSTARTPALSPTQ. A compositionally biased stretch (basic and acidic residues) spans 2301-2314; the sequence is HPREGLADMEHQQP. LDL-receptor class A domains follow at residues 2391–2427 and 2448–2484; these read RCGPGQVPCDVLGCVEQEQLCDGREDCLDGSDEQHCA and LCSPSQLSCGSGECLPLEHRCDLQVNCQDGSDEDDCV. 12 cysteine pairs are disulfide-bonded: Cys-2392-Cys-2404, Cys-2399-Cys-2417, Cys-2411-Cys-2426, Cys-2449-Cys-2461, Cys-2456-Cys-2474, Cys-2468-Cys-2483, Cys-2486-Cys-2522, Cys-2497-Cys-2501, Cys-2532-Cys-2537, Cys-2552-Cys-2589, Cys-2556-Cys-2594, and Cys-2567-Cys-2579. 2 consecutive TSP type-1 domains span residues 2485-2538 and 2540-2595; these read DCVL…QACP and AGAW…QLCP. A TIL 4 domain is found at 2618-2660; sequence PPCPPSCLDPEANRSCSGHCVEGCRCPPGLFLQDSHCLPLSEC. N-linked (GlcNAc...) asparagine glycosylation is found at Asn-2630 and Asn-2679. 3 consecutive TSP type-1 domains span residues 2700–2754, 2758–2813, and 2815–2868; these read SCGW…TDCG, PGWT…SLCP, and PSAW…HPCT. Intrachain disulfides connect Cys-2701-Cys-2739, Cys-2712-Cys-2716, Cys-2749-Cys-2753, Cys-2769-Cys-2807, Cys-2773-Cys-2812, Cys-2789-Cys-2797, Cys-2827-Cys-2862, Cys-2831-Cys-2867, and Cys-2842-Cys-2852. Asn-2921 and Asn-2951 each carry an N-linked (GlcNAc...) asparagine glycan. TSP type-1 domains lie at 2969–3024 and 3025–3068; these read ACGW…RPCQ and GPGA…QPCA. 3 cysteine pairs are disulfide-bonded: Cys-2970-Cys-3008, Cys-2981-Cys-2985, and Cys-3018-Cys-3023. Residues Asn-3046, Asn-3101, Asn-3148, and Asn-3158 are each glycosylated (N-linked (GlcNAc...) asparagine). The TIL 5 domain occupies 3075 to 3127; it reads CPKDQQWLDCAQGPASCAHLSTPREANQTCHPGCYCLSGMLLLNNVCVPAQDC. TSP type-1 domains are found at residues 3168–3235 and 3237–3292; these read QPAW…PGCN and AGVW…QPCP. Cystine bridges form between Cys-3180-Cys-3229, Cys-3184-Cys-3234, Cys-3195-Cys-3219, Cys-3249-Cys-3286, Cys-3253-Cys-3291, and Cys-3264-Cys-3276. N-linked (GlcNAc...) asparagine glycosylation occurs at Asn-3295. In terms of domain architecture, TIL 6 spans 3300–3350; sequence EGAEYSPCGPPCPRSCDDLVHCMWHCQPGCYCPPGKVLSADGAICVQPHHC. The N-linked (GlcNAc...) asparagine glycan is linked to Asn-3384. TSP type-1 domains lie at 3393–3455 and 3457–3512; these read SGDW…TACP and DGAW…TPCT. Disulfide bonds link Cys-3405/Cys-3448, Cys-3409/Cys-3454, Cys-3420/Cys-3432, Cys-3469/Cys-3504, Cys-3472/Cys-3511, and Cys-3482/Cys-3494. N-linked (GlcNAc...) asparagine glycosylation is present at Asn-3506. Residues 3514–3570 form the TIL 7 domain; sequence CGGGQDLLPCGQPCPHSCQDLSLGSTCQPGSSGCQSGCGCPPGQLSQDGLCVFPADC. N-linked (GlcNAc...) asparagine glycosylation is found at Asn-3584 and Asn-3611. One can recognise a TSP type-1 14 domain in the interval 3630-3678; it reads PGIWSSWGPWEKCSVPCGGGEQLRSRQCARPPCPGLAQQSRTCHIHVCR. 3 cysteine pairs are disulfide-bonded: Cys-3642–Cys-3672, Cys-3646–Cys-3677, and Cys-3657–Cys-3662. An N-linked (GlcNAc...) asparagine glycan is attached at Asn-3787. TSP type-1 domains lie at 3806–3862, 3876–3928, 3942–3998, and 4000–4055; these read RGYF…PECP, AGGW…PSCT, NCFW…RACP, and PGGW…MPCE. Disulfide bonds link Cys-3818/Cys-3856, Cys-3822/Cys-3861, and Cys-3834/Cys-3846. The N-linked (GlcNAc...) asparagine glycan is linked to Asn-3910. Cystine bridges form between Cys-3943–Cys-3979, Cys-3954–Cys-3958, Cys-3992–Cys-3997, Cys-4012–Cys-4049, Cys-4016–Cys-4054, and Cys-4027–Cys-4039. Residues 4058–4113 form the TIL 8 domain; it reads CPAGMEMVSCANRCPYSCSDLQEAVMCQEDQACQLGCRCSEGFLEQDGGCVPVGHC. A glycan (N-linked (GlcNAc...) asparagine) is linked at Asn-4135. TSP type-1 domains are found at residues 4155 to 4208, 4249 to 4304, 4306 to 4362, and 4364 to 4418; these read HCAW…DPCP, PGGW…QLCL, LLEI…GPCQ, and DCMW…GNCS. Cystine bridges form between Cys-4156–Cys-4192, Cys-4167–Cys-4171, Cys-4202–Cys-4207, Cys-4261–Cys-4298, Cys-4265–Cys-4303, and Cys-4276–Cys-4288. Asn-4345 is a glycosylation site (N-linked (GlcNAc...) asparagine). 3 cysteine pairs are disulfide-bonded: Cys-4365–Cys-4402, Cys-4376–Cys-4378, and Cys-4412–Cys-4417. Asn-4416 carries an N-linked (GlcNAc...) asparagine glycan. In terms of domain architecture, TIL 9 spans 4422–4477; sequence CLPPFEFQSCGSPCAGLCATHLSHQLCQDLPPCQPGCYCPMGLLEQDGGCILPEQC. An N-linked (GlcNAc...) asparagine glycan is attached at Asn-4557. One can recognise a TSP type-1 23 domain in the interval 4608 to 4659; the sequence is TCQWGPWGPWSPCQVPCSGGFKLRWREASDNSVGECRGPWAQTESCNMGSCP. 3 cysteine pairs are disulfide-bonded: Cys-4609–Cys-4643, Cys-4620–Cys-4624, and Cys-4653–Cys-4658. The TIL 10 domain maps to 4673–4719; it reads DCANQCPRSCADLWEGVQCLQGPCSPGCRCPPGQLVQDGHCVPISSC. N-linked (GlcNAc...) asparagine glycosylation is found at Asn-4727, Asn-4744, and Asn-4749. Residues 4759–4812 enclose the TSP type-1 24 domain; that stretch reads CPVLGPWSPWSECSAVCGGGTMVRYRSCEEHPDSAPCQALDMEQRVECNLQTCP. Intrachain disulfides connect Cys-4771-Cys-4806, Cys-4775-Cys-4811, and Cys-4786-Cys-4795. The 55-residue stretch at 4814–4868 folds into the TIL 11 domain; that stretch reads CPPGQVLSTCATLCPSFCSHLWPGTICVREPCQLGCGCPGGQLLHSGTCIPPEAC. Residues Asn-4899, Asn-4942, and Asn-4949 are each glycosylated (N-linked (GlcNAc...) asparagine). Positions 4920 to 4978 constitute a TIL 12 domain; sequence CPPGEILQLGELRPCEKTCLEMNKTQAWSNCTEAQVPGCVCQLGHFRSHTGLCVPEDHC. Residues 4978–5036 enclose the VWFC 2 domain; it reads CECWHHGSPHLPGSEWQEACESCRCLHGKSVCTQHCPELSCAQGEVVVQEPGSCCPICQ. 4 disulfides stabilise this stretch: Cys-5047-Cys-5095, Cys-5061-Cys-5112, Cys-5071-Cys-5128, and Cys-5075-Cys-5130. In terms of domain architecture, CTCK spans 5047–5134; sequence CRHLTELRNL…IHNCHCSACQ (88 aa). N-linked (GlcNAc...) asparagine glycosylation occurs at Asn-5055.

It belongs to the thrombospondin family.

It localises to the secreted. The protein localises to the extracellular space. Involved in the modulation of neuronal aggregation. May be involved in developmental events during the formation of the central nervous system. The sequence is that of SCO-spondin from Rattus norvegicus (Rat).